Consider the following 145-residue polypeptide: Acidic phospholipase A2 homolog textilotoxin C chain (145 aa).

The N-terminal stretch at Met-1–Ala-19 is a signal peptide. The propeptide occupies Ala-20 to Leu-27. Cystine bridges form between Cys-38-Cys-98, Cys-54-Cys-144, Cys-56-Cys-72, Cys-71-Cys-125, Cys-78-Cys-118, Cys-87-Cys-111, and Cys-105-Cys-116.

Belongs to the phospholipase A2 family. Group I subfamily. D49 sub-subfamily. In terms of assembly, heterohexamer. 2 forms exist: 2 A or 2 B chains, 2 C chains and 2 covalently-linked D chains, and 1 A or 1 B, 1 C, 2 covalently-linked D chains and 2 differentially glycosylated covalently-linked D chains. Textilotoxin was originally described as pentameric. In terms of tissue distribution, expressed by the venom gland.

Its subcellular location is the secreted. In terms of biological role, snake venom oligomeric phospholipase A2 that has potent presynaptic neurotoxicity. Chain C is not itself neurotoxic, but it is essential for the neurotoxicity of textilotoxin. Chain C possesses a very low phospholipase activity. The protein is Acidic phospholipase A2 homolog textilotoxin C chain of Pseudonaja textilis (Eastern brown snake).